A 423-amino-acid polypeptide reads, in one-letter code: UPF0229 protein Pput_0430 (423 aa).

The tract at residues 81–108 (EFTAGEHIPRPQGGGGGGGRGKAGNSGE) is disordered. The span at 92–107 (QGGGGGGGRGKAGNSG) shows a compositional bias: gly residues.

Belongs to the UPF0229 family.

The chain is UPF0229 protein Pput_0430 from Pseudomonas putida (strain ATCC 700007 / DSM 6899 / JCM 31910 / BCRC 17059 / LMG 24140 / F1).